The sequence spans 374 residues: D-amino-acid oxidase 3 (374 aa).

A signal peptide spans Met1 to Ala19. FAD is bound by residues Ser11, Leu14, Lys34, Asp35, Ala46, Ser47, and Gly51. Asn180 is a glycosylation site (N-linked (GlcNAc...) asparagine). An intrachain disulfide couples Cys214 to Cys271. Positions 229, 246, and 296 each coordinate (R)-lactate. The anthranilate site is built by Tyr229, Tyr246, and Arg296. Residues Arg296, Gly342, Gly345, Tyr346, and Gln347 each contribute to the FAD site. The Microbody targeting signal motif lies at Ala372–Leu374.

It belongs to the DAMOX/DASOX family. FAD is required as a cofactor.

It localises to the peroxisome matrix. It carries out the reaction a D-alpha-amino acid + O2 + H2O = a 2-oxocarboxylate + H2O2 + NH4(+). Functionally, catalyzes the oxidative deamination of D-amino acids with broad substrate specificity. Enables the organism to utilize D-amino acids as a source of nutrients. Enables the organism to utilize D-asparate and D-glutamate as a nitrogen source and may also contribute to utlization of D-tryptophan, D-tyrosine and D-asparagine as a nitrogen source. Protects the organism from the toxicity of D-amino acids, including from D-glutamate. May play a role in its interaction with the host. This Cryptococcus deuterogattii (strain R265) (Cryptococcus gattii VGII (strain R265)) protein is D-amino-acid oxidase 3.